Consider the following 251-residue polypeptide: Ubiquinone/menaquinone biosynthesis C-methyltransferase UbiE (251 aa).

Residues T74, D95, 123 to 124 (NA), and S140 each bind S-adenosyl-L-methionine.

This sequence belongs to the class I-like SAM-binding methyltransferase superfamily. MenG/UbiE family.

It carries out the reaction a 2-demethylmenaquinol + S-adenosyl-L-methionine = a menaquinol + S-adenosyl-L-homocysteine + H(+). It catalyses the reaction a 2-methoxy-6-(all-trans-polyprenyl)benzene-1,4-diol + S-adenosyl-L-methionine = a 5-methoxy-2-methyl-3-(all-trans-polyprenyl)benzene-1,4-diol + S-adenosyl-L-homocysteine + H(+). It functions in the pathway quinol/quinone metabolism; menaquinone biosynthesis; menaquinol from 1,4-dihydroxy-2-naphthoate: step 2/2. It participates in cofactor biosynthesis; ubiquinone biosynthesis. Methyltransferase required for the conversion of demethylmenaquinol (DMKH2) to menaquinol (MKH2) and the conversion of 2-polyprenyl-6-methoxy-1,4-benzoquinol (DDMQH2) to 2-polyprenyl-3-methyl-6-methoxy-1,4-benzoquinol (DMQH2). This chain is Ubiquinone/menaquinone biosynthesis C-methyltransferase UbiE, found in Escherichia coli O1:K1 / APEC.